Consider the following 450-residue polypeptide: Divalent metal cation transporter MntH (450 aa).

Transmembrane regions (helical) follow at residues 34–54 (LSFLGPGLLVAGGYMDSGNWI), 59–81 (GGAQYGYTLLFGNLISRLSAMLL), 108–128 (IAIIFWIIAELAIIATDIAEV), 141–161 (IPLIVGALITVLDVFLLLFIM), 170–190 (AIVGTLIFTVLFIFIFEVYIS), 212–232 (GILYIALGIIGATIMPHNLYL), 263–283 (IQLSIAFVVNCLLLVLGASLF), 305–325 (PVLGATMGAIMSTLFAVALLA), 361–381 (SLAVIPVIVCLIIFKGNAAKI), 383–403 (QLLVFSQVFLSIALPFCLIPL), and 422–442 (VNIISWTLIIILSILNVYLIV).

This sequence belongs to the NRAMP family.

It localises to the cell membrane. Functionally, h(+)-stimulated, divalent metal cation uptake system. This is Divalent metal cation transporter MntH from Staphylococcus aureus (strain MRSA252).